Reading from the N-terminus, the 163-residue chain is ATP synthase subunit b', chloroplastic (163 aa).

The chain crosses the membrane as a helical span at residues 26–46; it reads ATLPLMAVQILLFMVILNAVF.

Belongs to the ATPase B chain family. As to quaternary structure, F-type ATPases have 2 components, F(1) - the catalytic core - and F(0) - the membrane proton channel. F(1) has five subunits: alpha(3), beta(3), gamma(1), delta(1), epsilon(1). F(0) has four main subunits: a(1), b(1), b'(1) and c(10-14). The alpha and beta chains form an alternating ring which encloses part of the gamma chain. F(1) is attached to F(0) by a central stalk formed by the gamma and epsilon chains, while a peripheral stalk is formed by the delta, b and b' chains.

It is found in the plastid. Its subcellular location is the chloroplast thylakoid membrane. Its function is as follows. F(1)F(0) ATP synthase produces ATP from ADP in the presence of a proton or sodium gradient. F-type ATPases consist of two structural domains, F(1) containing the extramembraneous catalytic core and F(0) containing the membrane proton channel, linked together by a central stalk and a peripheral stalk. During catalysis, ATP synthesis in the catalytic domain of F(1) is coupled via a rotary mechanism of the central stalk subunits to proton translocation. Component of the F(0) channel, it forms part of the peripheral stalk, linking F(1) to F(0). The b'-subunit is a diverged and duplicated form of b found in plants and photosynthetic bacteria. In Guillardia theta (Cryptophyte), this protein is ATP synthase subunit b', chloroplastic.